A 521-amino-acid polypeptide reads, in one-letter code: U4/U6 small nuclear ribonucleoprotein Prp4 (521 aa).

At Lys-26 the chain carries N6-acetyllysine. WD repeat units lie at residues 229–268 (DDRP…LHTL), 271–318 (HNTN…VADI), 321–360 (HTVR…ILHQ), 363–402 (HSMG…IMFL), 405–444 (HLKE…VYTI), 447–487 (HQNL…LKTL), and 490–521 (HEGK…WMAE).

Component of the precatalytic spliceosome (spliceosome B complex). Component of the U4/U6-U5 tri-snRNP complex, a building block of the precatalytic spliceosome (spliceosome B complex). The U4/U6-U5 tri-snRNP complex is composed of the U4, U6 and U5 snRNAs and at least PRPF3, PRPF4, PRPF6, PRPF8, PRPF31, SNRNP200, TXNL4A, SNRNP40, SNRPB, SNRPD1, SNRPD2, SNRPD3, SNRPE, SNRPF, SNRPG, DDX23, CD2BP2, PPIH, SNU13, EFTUD2, SART1 and USP39, plus LSM2, LSM3, LSM4, LSM5, LSM6, LSM7 and LSM8. Interacts directly with PRPF18, PPIH and PRPF3. Part of a heteromeric complex containing PPIH, PRPF3 and PRPF4 that is stable in the absence of RNA. Interacts with ERCC6.

It is found in the nucleus. The protein resides in the nucleus speckle. Plays a role in pre-mRNA splicing as component of the U4/U6-U5 tri-snRNP complex that is involved in spliceosome assembly, and as component of the precatalytic spliceosome (spliceosome B complex). This chain is U4/U6 small nuclear ribonucleoprotein Prp4 (PRPF4), found in Bos taurus (Bovine).